Consider the following 335-residue polypeptide: Ornithine carbamoyltransferase (335 aa).

Carbamoyl phosphate is bound by residues 60 to 63, Gln87, Arg111, and 138 to 141; these read STRT and HPTQ. L-ornithine is bound by residues Asn171, Asp235, and 239 to 240; that span reads SM. Residues 277-278 and Arg322 contribute to the carbamoyl phosphate site; that span reads CL.

It belongs to the aspartate/ornithine carbamoyltransferase superfamily. OTCase family.

The protein resides in the cytoplasm. It carries out the reaction carbamoyl phosphate + L-ornithine = L-citrulline + phosphate + H(+). It functions in the pathway amino-acid biosynthesis; L-arginine biosynthesis; L-arginine from L-ornithine and carbamoyl phosphate: step 1/3. Functionally, reversibly catalyzes the transfer of the carbamoyl group from carbamoyl phosphate (CP) to the N(epsilon) atom of ornithine (ORN) to produce L-citrulline. The chain is Ornithine carbamoyltransferase from Streptomyces avermitilis (strain ATCC 31267 / DSM 46492 / JCM 5070 / NBRC 14893 / NCIMB 12804 / NRRL 8165 / MA-4680).